A 159-amino-acid polypeptide reads, in one-letter code: MSGLKKYVMTYEGIKKLENELEYLKTVKRKEITEKIKVALSFGDLSENSEYDSAKNEQAFVEGRIVQLENMLKNASMVDEDEVPLDIVGIGSIVKVKDYDLDEEVEYLIVGSAEADPINNKISNESPVGKGLVGKKPGDVIEIQVPDGVSKYKILNIRR.

Positions 14-76 (IKKLENELEY…QLENMLKNAS (63 aa)) form a coiled coil.

It belongs to the GreA/GreB family.

Its function is as follows. Necessary for efficient RNA polymerase transcription elongation past template-encoded arresting sites. The arresting sites in DNA have the property of trapping a certain fraction of elongating RNA polymerases that pass through, resulting in locked ternary complexes. Cleavage of the nascent transcript by cleavage factors such as GreA or GreB allows the resumption of elongation from the new 3'terminus. GreA releases sequences of 2 to 3 nucleotides. This chain is Transcription elongation factor GreA, found in Clostridium kluyveri (strain NBRC 12016).